An 826-amino-acid polypeptide reads, in one-letter code: Dolichyl-diphosphooligosaccharide--protein glycosyltransferase subunit STT3B (826 aa).

Positions 1–60 (MAEPSAPESKHKSSLNSSPWSGLMALGNSRHGHHGPGAQCAHKAAGGAAPPKPAPAGLSG) are disordered. Position 2 is an N-acetylalanine (Ala2). Over 2–41 (AEPSAPESKHKSSLNSSPWSGLMALGNSRHGHHGPGAQCA) the chain is Cytoplasmic. Ser13, Ser18, and Ser29 each carry phosphoserine. Low complexity predominate over residues 37–49 (GAQCAHKAAGGAA). The chain crosses the membrane as a helical span at residues 42 to 86 (HKAAGGAAPPKPAPAGLSGGLSQPAGWQSLLSFTILFLAWLAGFS). Residues 87 to 173 (SRLFAVIRFE…VHIRDVCVFL (87 aa)) lie on the Lumenal side of the membrane. Residues 101 to 103 (EFD) carry the DXD motif 1 motif. A Mn(2+)-binding site is contributed by Asp103. Residues 174–192 (APTFSGLTSISTFLLTREL) form a helical membrane-spanning segment. Over 193–194 (WN) the chain is Cytoplasmic. The chain crosses the membrane as a helical span at residues 195–212 (QGAGLLAACFIAIVPGYI). Topologically, residues 213–223 (SRSVAGSFDNE) are lumenal. Asp221 and Glu223 together coordinate Mn(2+). The DXD motif 2 signature appears at 221–223 (DNE). A helical membrane pass occupies residues 224 to 243 (GIAIFALQFTYYLWVKSVKT). The Cytoplasmic portion of the chain corresponds to 244–245 (GS). The chain crosses the membrane as a helical span at residues 246–260 (VFWTMCCCLSYFYMV). Residues 261-265 (SAWGG) lie on the Lumenal side of the membrane. Residues 266–282 (YVFIINLIPLHVFVLLL) form a helical membrane-spanning segment. Over 283-287 (MQRYS) the chain is Cytoplasmic. A helical transmembrane segment spans residues 288 to 313 (KRVYIAYSTFYIVGLILSMQIPFVGF). Over 314 to 321 (QPIRTSEH) the chain is Lumenal. Residues 322–341 (MAAAGVFALLQAYAFLQYLR) traverse the membrane as a helical segment. Residues 342–350 (DRLTKQEFQ) are Cytoplasmic-facing. Residues 351–371 (TLFFLGVSLAAGAVFLSVIYL) form a helical membrane-spanning segment. The Lumenal portion of the chain corresponds to 372–410 (TYTGYIAPWSGRFYSLWDTGYAKIHIPIIASVSEHQPTT). The short motif at 402–405 (SVSE) is the SVSE motif element. A helical membrane pass occupies residues 411–433 (WVSFFFDLHILVCTFPAGLWFCI). Over 434–439 (KNINDE) the chain is Cytoplasmic. The chain crosses the membrane as a helical span at residues 440 to 456 (RVFVALYAISAVYFAGV). The Lumenal portion of the chain corresponds to 457-460 (MVRL). Arg459 lines the dolichyl diphosphooligosaccharide pocket. A helical membrane pass occupies residues 461–482 (MLTLTPVVCMLSAIAFSNVFEH). The Cytoplasmic portion of the chain corresponds to 483 to 526 (YLGDDMKRENPPVEDSSDEDDKRNQGNLYDKAGKVRKHATEQEK). Positions 490–509 (RENPPVEDSSDEDDKRNQGN) are disordered. Ser498 and Ser499 each carry phosphoserine. The chain crosses the membrane as a helical span at residues 527-552 (TEEGLGPNIKSIVTMLMLMLLMMFAV). Over 553–826 (HCTWVTSNAY…KGKKISKKTV (274 aa)) the chain is Lumenal. Residues 604–606 (WWD) are interacts with target acceptor peptide in protein substrate. Positions 604–608 (WWDYG) match the WWDYG motif motif. A dolichyl diphosphooligosaccharide-binding site is contributed by Tyr609. 2 N-linked (GlcNAc...) asparagine glycosylation sites follow: Asn616 and Asn623. Asn627 carries N-linked (GlcNAc...) (high mannose) asparagine glycosylation. A glycan (N-linked (GlcNAc...) asparagine) is linked at Asn641. The DK motif signature appears at 671 to 678 (DINKFLWM).

It belongs to the STT3 family. As to quaternary structure, component of the oligosaccharyltransferase (OST) complex. There are 2 OST complexes, OST-A and OST-B, which contain STT3A or STT3B as catalytic subunit, respectively. OST-A and OST-B contain common core subunits RPN1, RPN2, OST48, OST4, DAD1 and TMEM258, and OST-B contains either MAGT1 or TUSC3 as specific accessory subunit. Requires Mg(2+) as cofactor. Mn(2+) is required as a cofactor. As to expression, expressed in heart, brain, placenta, lung, liver, muscle, kidney and pancreas. Expressed in skin fibroblasts (at protein level).

It localises to the endoplasmic reticulum. The protein localises to the endoplasmic reticulum membrane. It carries out the reaction a di-trans,poly-cis-dolichyl diphosphooligosaccharide + L-asparaginyl-[protein] = N(4)-(oligosaccharide-(1-&gt;4)-N-acetyl-beta-D-glucosaminyl-(1-&gt;4)-N-acetyl-beta-D-glucosaminyl)-L-asparaginyl-[protein] + a di-trans,poly-cis-dolichyl diphosphate + H(+). Its pathway is protein modification; protein glycosylation. Its function is as follows. Catalytic subunit of the oligosaccharyl transferase (OST) complex that catalyzes the initial transfer of a defined glycan (Glc(3)Man(9)GlcNAc(2) in eukaryotes) from the lipid carrier dolichol-pyrophosphate to an asparagine residue within an Asn-X-Ser/Thr consensus motif in nascent polypeptide chains, the first step in protein N-glycosylation. N-glycosylation occurs cotranslationally and the complex associates with the Sec61 complex at the channel-forming translocon complex that mediates protein translocation across the endoplasmic reticulum (ER). All subunits are required for a maximal enzyme activity. This subunit contains the active site and the acceptor peptide and donor lipid-linked oligosaccharide (LLO) binding pockets. STT3B is present in a small subset of OST complexes (OST-B) and mediates both cotranslational and post-translational N-glycosylation of target proteins: STT3B-containing complexes are required for efficient post-translational glycosylation and while they are less competent than STT3A-containing complexes for cotranslational glycosylation, they have the ability to mediate glycosylation of some nascent sites that are not accessible for STT3A. STT3B-containing complexes also act post-translationally and mediate modification of skipped glycosylation sites in unfolded proteins. Plays a role in ER-associated degradation (ERAD) pathway that mediates ubiquitin-dependent degradation of misfolded endoplasmic reticulum proteins by mediating N-glycosylation of unfolded proteins, which are then recognized by the ERAD pathway and targeted for degradation. Mediates glycosylation of the disease variant AMYL-TTR 'Asp-38' of TTR at 'Asn-118', leading to its degradation. The sequence is that of Dolichyl-diphosphooligosaccharide--protein glycosyltransferase subunit STT3B from Homo sapiens (Human).